Reading from the N-terminus, the 124-residue chain is Large ribosomal subunit protein bL12 (124 aa).

Residues 94 to 124 form a disordered region; the sequence is APKPVKESVPKAAAEEAKKKLEEAGAKAEIK.

Belongs to the bacterial ribosomal protein bL12 family. Homodimer. Part of the ribosomal stalk of the 50S ribosomal subunit. Forms a multimeric L10(L12)X complex, where L10 forms an elongated spine to which 2 to 4 L12 dimers bind in a sequential fashion. Binds GTP-bound translation factors.

Forms part of the ribosomal stalk which helps the ribosome interact with GTP-bound translation factors. Is thus essential for accurate translation. The sequence is that of Large ribosomal subunit protein bL12 from Paraburkholderia phytofirmans (strain DSM 17436 / LMG 22146 / PsJN) (Burkholderia phytofirmans).